Here is a 462-residue protein sequence, read N- to C-terminus: Proteases secretion protein PrtF (462 aa).

A signal peptide spans 1-23 (MRRKAVLLTVVLSLSGGSAQAMG).

Belongs to the outer membrane factor (OMF) (TC 1.B.17) family.

The protein localises to the cell outer membrane. Its function is as follows. Involved in the secretion of proteases A, B, C and G. The polypeptide is Proteases secretion protein PrtF (prtF) (Dickeya chrysanthemi (Pectobacterium chrysanthemi)).